A 374-amino-acid chain; its full sequence is CMP-N-acetylneuraminate-beta-1,4-galactoside alpha-2,3-sialyltransferase (374 aa).

At 1–8 (MGLLVFVR) the chain is on the cytoplasmic side. Residues 9-28 (NLLLALCLFLVLGFLYYSAW) form a helical; Signal-anchor for type II membrane protein membrane-spanning segment. Topologically, residues 29 to 374 (KLHLLQWEDS…RVITDLSSGI (346 aa)) are lumenal. N-linked (GlcNAc...) asparagine glycans are attached at residues Asn79 and Asn170. A disulfide bond links Cys159 and Cys313.

The protein belongs to the glycosyltransferase 29 family. Found in all tissues tested. High expression found in brain, liver, kidney, colon, heart and spleen.

Its subcellular location is the membrane. The protein resides in the golgi apparatus. It is found in the golgi stack membrane. The catalysed reaction is a beta-D-galactosyl-(1-&gt;4)-N-acetyl-beta-D-glucosaminyl derivative + CMP-N-acetyl-beta-neuraminate = an N-acetyl-alpha-neuraminyl-(2-&gt;3)-beta-D-galactosyl-(1-&gt;4)-N-acetyl-beta-D-glucosaminyl derivative + CMP + H(+). It functions in the pathway protein modification; protein glycosylation. In terms of biological role, catalyzes the formation of the NeuAc-alpha-2,3-Gal-beta-1,4-GlcNAc-, NeuAc-alpha-2,3-Gal-beta-1,3-GlcNAc- and NeuAc-alpha-2,3-Gal-beta-1,3-GalNAc- sequences found in terminal carbohydrate groups of glycoproteins and glycolipids. The highest activity is toward Gal-beta-1,3-GlcNAc and the lowest toward Gal-beta-1,3-GalNAc. The chain is CMP-N-acetylneuraminate-beta-1,4-galactoside alpha-2,3-sialyltransferase (St3gal3) from Mus musculus (Mouse).